The following is a 57-amino-acid chain: Small nuclear protein PRAC1 (57 aa).

The tract at residues 38 to 57 (RSDGSACNSGISGGRGRKIP) is disordered.

In terms of tissue distribution, highly expressed in prostate, rectum, and distal colon, and weakly expressed in bladder. Expressed in prostate cancer cell lines.

The protein localises to the nucleus. This Homo sapiens (Human) protein is Small nuclear protein PRAC1 (PRAC1).